A 152-amino-acid polypeptide reads, in one-letter code: Protein SprT-like (152 aa).

In terms of domain architecture, SprT-like spans 7-148 (QRLVEEVSLQ…GKCKGKLILI (142 aa)). H67 serves as a coordination point for Zn(2+). E68 is a catalytic residue. H71 is a binding site for Zn(2+).

The protein belongs to the SprT family. Zn(2+) is required as a cofactor.

It localises to the cytoplasm. The sequence is that of Protein SprT-like from Bacillus cereus (strain AH187).